A 352-amino-acid chain; its full sequence is Secretion system apparatus protein SsaU (352 aa).

A run of 4 helical transmembrane segments spans residues leucine 34–glutamate 54, leucine 89–isoleucine 109, leucine 144–phenylalanine 164, and valine 176–valine 196.

This sequence belongs to the type III secretion exporter family.

Its subcellular location is the cell membrane. In terms of biological role, part of a type III secretion system. In Salmonella typhimurium (strain LT2 / SGSC1412 / ATCC 700720), this protein is Secretion system apparatus protein SsaU (ssaU).